The primary structure comprises 254 residues: 3-deoxy-manno-octulosonate cytidylyltransferase (254 aa).

Belongs to the KdsB family.

Its subcellular location is the cytoplasm. It carries out the reaction 3-deoxy-alpha-D-manno-oct-2-ulosonate + CTP = CMP-3-deoxy-beta-D-manno-octulosonate + diphosphate. It participates in nucleotide-sugar biosynthesis; CMP-3-deoxy-D-manno-octulosonate biosynthesis; CMP-3-deoxy-D-manno-octulosonate from 3-deoxy-D-manno-octulosonate and CTP: step 1/1. It functions in the pathway bacterial outer membrane biogenesis; lipopolysaccharide biosynthesis. Activates KDO (a required 8-carbon sugar) for incorporation into bacterial lipopolysaccharide in Gram-negative bacteria. This is 3-deoxy-manno-octulosonate cytidylyltransferase from Bordetella pertussis (strain Tohama I / ATCC BAA-589 / NCTC 13251).